The primary structure comprises 49 residues: Large ribosomal subunit protein bL33A (49 aa).

It belongs to the bacterial ribosomal protein bL33 family.

In Streptococcus pneumoniae (strain Hungary19A-6), this protein is Large ribosomal subunit protein bL33A.